The following is a 273-amino-acid chain: Large ribosomal subunit protein uL2 (273 aa).

Residues 221–262 (RGTAMNPVDHPHGGGEGRNFGKHPVTPWGVQTKGKKTRHNKR) form a disordered region. The span at 253 to 262 (KGKKTRHNKR) shows a compositional bias: basic residues.

Belongs to the universal ribosomal protein uL2 family. In terms of assembly, part of the 50S ribosomal subunit. Forms a bridge to the 30S subunit in the 70S ribosome.

One of the primary rRNA binding proteins. Required for association of the 30S and 50S subunits to form the 70S ribosome, for tRNA binding and peptide bond formation. It has been suggested to have peptidyltransferase activity; this is somewhat controversial. Makes several contacts with the 16S rRNA in the 70S ribosome. The sequence is that of Large ribosomal subunit protein uL2 from Aggregatibacter actinomycetemcomitans (Actinobacillus actinomycetemcomitans).